A 210-amino-acid chain; its full sequence is MATRIENKKLSKSSSAWMKEHIDDHYVQKAQKDGYRARAAYKLLEINEKTNLIKKGMTVVDLGSAPGSWSQVAGQLVGEKGILIASDILPMDTLPDVTFIQGDFREPEVFDHIMAEVGDRQVDVVLSDMAPNTAGNSAIDQPRMMYLCELAVDFALATLPEGGALIMKVFQGEGTQELRKQMQADFSKIRSIKPGASRPRSKEMFWIAIK.

Residues Gly-67, Trp-69, Asp-87, Asp-103, and Asp-128 each coordinate S-adenosyl-L-methionine. Catalysis depends on Lys-168, which acts as the Proton acceptor.

It belongs to the class I-like SAM-binding methyltransferase superfamily. RNA methyltransferase RlmE family.

The protein localises to the cytoplasm. The enzyme catalyses uridine(2552) in 23S rRNA + S-adenosyl-L-methionine = 2'-O-methyluridine(2552) in 23S rRNA + S-adenosyl-L-homocysteine + H(+). Specifically methylates the uridine in position 2552 of 23S rRNA at the 2'-O position of the ribose in the fully assembled 50S ribosomal subunit. This chain is Ribosomal RNA large subunit methyltransferase E, found in Psychrobacter arcticus (strain DSM 17307 / VKM B-2377 / 273-4).